Reading from the N-terminus, the 366-residue chain is Flagellar P-ring protein (366 aa).

Positions 1 to 20 (MVIKFLSALILLLVTTAAQA) are cleaved as a signal peptide.

This sequence belongs to the FlgI family. As to quaternary structure, the basal body constitutes a major portion of the flagellar organelle and consists of four rings (L,P,S, and M) mounted on a central rod.

It localises to the periplasm. The protein localises to the bacterial flagellum basal body. Assembles around the rod to form the L-ring and probably protects the motor/basal body from shearing forces during rotation. The chain is Flagellar P-ring protein from Escherichia coli O1:K1 / APEC.